Here is a 141-residue protein sequence, read N- to C-terminus: Hemoglobin subunit zeta (141 aa).

S1 carries the N-acetylserine modification. The Globin domain occupies 1–141; it reads SLTKAERTII…VSGVLTEKYR (141 aa). A Phosphothreonine modification is found at T28. At S52 the chain carries Phosphoserine. H58 contacts heme b. S72 is modified (phosphoserine). H87 provides a ligand contact to heme b.

Belongs to the globin family. In terms of assembly, heterotetramer of two zeta chains and two epsilon chains.

The zeta chain is an alpha-type chain of mammalian embryonic hemoglobin. This chain is Hemoglobin subunit zeta, found in Sus scrofa (Pig).